The primary structure comprises 118 residues: MKTIIVFLSFLVLVLATKFGDANEGVNREQTKEVIQNEFRGDFLNEMAAMSLLQQLEAIESALLEKEADRNSRQKRCNGKNVPCGSNHSPCCSGLSCEETFGYGWLYKSPYCVIPSNG.

The N-terminal stretch at 1–16 is a signal peptide; sequence MKTIIVFLSFLVLVLA. Residues 17–76 constitute a propeptide that is removed on maturation; sequence TKFGDANEGVNREQTKEVIQNEFRGDFLNEMAAMSLLQQLEAIESALLEKEADRNSRQKR. 3 disulfides stabilise this stretch: Cys77-Cys92, Cys84-Cys97, and Cys91-Cys112.

This sequence belongs to the neurotoxin 14 (magi-1) family. 06 (ICK-Trit) subfamily. In terms of tissue distribution, expressed by the venom gland.

The protein resides in the secreted. Functionally, ion channel inhibitor. This Trittame loki (Brush-footed trapdoor spider) protein is U16-barytoxin-Tl1c.